The primary structure comprises 967 residues: Importin-alpha re-exporter (967 aa).

Residues 20–95 (AEEALKVWEL…KREIINLMLK (76 aa)) enclose the Importin N-terminal domain.

The protein belongs to the XPO2/CSE1 family. Binds with high affinity to importin-alpha only in the presence of RanGTP.

It is found in the cytoplasm. It localises to the nucleus envelope. Export receptor for importin alpha. Mediates importin-alpha re-export from the nucleus to the cytoplasm after import substrates have been released into the nucleoplasm. The chain is Importin-alpha re-exporter (kap109) from Schizosaccharomyces pombe (strain 972 / ATCC 24843) (Fission yeast).